We begin with the raw amino-acid sequence, 706 residues long: Glutamine-dependent NAD(+) synthetase (706 aa).

The CN hydrolase domain occupies 5-275 (VTVATCALNQ…VEVLTATLDL (271 aa)). The active-site Proton acceptor; for glutaminase activity is glutamate 45. The For glutaminase activity role is filled by lysine 114. Cysteine 175 acts as the Nucleophile; for glutaminase activity in catalysis. A ligase region spans residues 325–706 (YHSPEEEISL…AEPQSLDGVD (382 aa)). Position 355–362 (355–362 (PLSGGVDS)) interacts with ATP. The active site involves serine 357.

This sequence in the C-terminal section; belongs to the NAD synthetase family. In terms of assembly, homohexamer.

The enzyme catalyses deamido-NAD(+) + L-glutamine + ATP + H2O = L-glutamate + AMP + diphosphate + NAD(+) + H(+). It functions in the pathway cofactor biosynthesis; NAD(+) biosynthesis; NAD(+) from deamido-NAD(+) (L-Gln route): step 1/1. Catalyzes the final step of the nicotinamide adenine dinucleotide (NAD) de novo synthesis pathway, the ATP-dependent amidation of deamido-NAD using L-glutamine as a nitrogen source. This is Glutamine-dependent NAD(+) synthetase (NADSYN1) from Homo sapiens (Human).